The following is a 513-amino-acid chain: GMP synthase [glutamine-hydrolyzing] (513 aa).

Residues 9–198 (LILVLDFGSQ…VRRVCECKGQ (190 aa)) form the Glutamine amidotransferase type-1 domain. Residue Cys86 is the Nucleophile of the active site. Residues His172 and Glu174 contribute to the active site. The region spanning 199-388 (WTMENFIEIE…LGIPEHLVWR (190 aa)) is the GMPS ATP-PPase domain. Position 226-232 (226-232 (SGGVDSS)) interacts with ATP.

As to quaternary structure, homodimer.

The catalysed reaction is XMP + L-glutamine + ATP + H2O = GMP + L-glutamate + AMP + diphosphate + 2 H(+). Its pathway is purine metabolism; GMP biosynthesis; GMP from XMP (L-Gln route): step 1/1. Its function is as follows. Catalyzes the synthesis of GMP from XMP. This Staphylococcus aureus (strain MSSA476) protein is GMP synthase [glutamine-hydrolyzing].